The sequence spans 143 residues: ATP synthase subunit b' (143 aa).

A helical transmembrane segment spans residues 6-26; it reads ATLPVMALQFILLAVILNAVF.

It belongs to the ATPase B chain family. In terms of assembly, F-type ATPases have 2 components, F(1) - the catalytic core - and F(0) - the membrane proton channel. F(1) has five subunits: alpha(3), beta(3), gamma(1), delta(1), epsilon(1). F(0) has four main subunits: a(1), b(1), b'(1) and c(10-14). The alpha and beta chains form an alternating ring which encloses part of the gamma chain. F(1) is attached to F(0) by a central stalk formed by the gamma and epsilon chains, while a peripheral stalk is formed by the delta, b and b' chains.

It localises to the cellular thylakoid membrane. Its function is as follows. F(1)F(0) ATP synthase produces ATP from ADP in the presence of a proton or sodium gradient. F-type ATPases consist of two structural domains, F(1) containing the extramembraneous catalytic core and F(0) containing the membrane proton channel, linked together by a central stalk and a peripheral stalk. During catalysis, ATP synthesis in the catalytic domain of F(1) is coupled via a rotary mechanism of the central stalk subunits to proton translocation. Functionally, component of the F(0) channel, it forms part of the peripheral stalk, linking F(1) to F(0). The b'-subunit is a diverged and duplicated form of b found in plants and photosynthetic bacteria. The sequence is that of ATP synthase subunit b' from Microcystis aeruginosa (strain NIES-843 / IAM M-2473).